The primary structure comprises 69 residues: MSFNLRGAVLANVSGNSQDQLQETIVDAIQSGEEKMLPGLGVLFEVIWKNADENEKHEMLGTLEQGLKK.

It belongs to the SspI family.

The protein resides in the spore core. This Bacillus mycoides (strain KBAB4) (Bacillus weihenstephanensis) protein is Small, acid-soluble spore protein I.